A 153-amino-acid chain; its full sequence is Large ribosomal subunit protein uL22 (153 aa).

Belongs to the universal ribosomal protein uL22 family. In terms of assembly, part of the 50S ribosomal subunit.

This protein binds specifically to 23S rRNA. It makes multiple contacts with different domains of the 23S rRNA in the assembled 50S subunit and ribosome. Its function is as follows. The globular domain of the protein is located near the polypeptide exit tunnel on the outside of the subunit, while an extended beta-hairpin is found that lines the wall of the exit tunnel in the center of the 70S ribosome. The sequence is that of Large ribosomal subunit protein uL22 from Methanococcus vannielii (strain ATCC 35089 / DSM 1224 / JCM 13029 / OCM 148 / SB).